A 665-amino-acid chain; its full sequence is DNA mismatch repair protein MutL (665 aa).

Composition is skewed to polar residues over residues 348 to 361 and 407 to 421; these read LEAT…NGLS and PSSQ…NSRY. Disordered regions lie at residues 348 to 370 and 385 to 445; these read LEAT…AEEG and VHRG…STSA. Residues 426-445 show a composition bias toward low complexity; the sequence is YSTNAASTNTASNYSHSTSA.

Belongs to the DNA mismatch repair MutL/HexB family.

This protein is involved in the repair of mismatches in DNA. It is required for dam-dependent methyl-directed DNA mismatch repair. May act as a 'molecular matchmaker', a protein that promotes the formation of a stable complex between two or more DNA-binding proteins in an ATP-dependent manner without itself being part of a final effector complex. The chain is DNA mismatch repair protein MutL from Shewanella denitrificans (strain OS217 / ATCC BAA-1090 / DSM 15013).